The primary structure comprises 355 residues: Neutral protease 2 homolog MEP6 (355 aa).

The first 19 residues, 1 to 19 (MRLSSSLIALVALAGQALA), serve as a signal peptide directing secretion. Residues 20–179 (LPFNELAERD…ASAIPELNKR (160 aa)) constitute a propeptide that is removed on maturation. Disulfide bonds link cysteine 187–cysteine 259 and cysteine 266–cysteine 283. A Zn(2+)-binding site is contributed by histidine 307. The active site involves glutamate 308. Residues histidine 311 and aspartate 322 each coordinate Zn(2+).

This sequence belongs to the peptidase M35 family. Zn(2+) is required as a cofactor.

It is found in the secreted. It carries out the reaction Preferential cleavage of bonds with hydrophobic residues in P1'. Also 3-Asn-|-Gln-4 and 8-Gly-|-Ser-9 bonds in insulin B chain.. Secreted metalloproteinase that allows assimilation of proteinaceous substrates. Shows high activities on basic nuclear substrates such as histone and protamine. May be involved in virulence. This is Neutral protease 2 homolog MEP6 (MEP6) from Coccidioides posadasii (strain C735) (Valley fever fungus).